The primary structure comprises 764 residues: Calpain-like protease palB/RIM13 (764 aa).

The 274-residue stretch at 95-368 (GEFYPPLTVY…FKYFYINWNP (274 aa)) folds into the Calpain catalytic domain. Active-site residues include cysteine 165, histidine 318, and asparagine 336.

It belongs to the peptidase C2 family. PalB/RIM13 subfamily.

Functionally, required for the proteolytic cleavage of the transcription factor RIM101 in response to alkaline ambient pH. In Debaryomyces hansenii (strain ATCC 36239 / CBS 767 / BCRC 21394 / JCM 1990 / NBRC 0083 / IGC 2968) (Yeast), this protein is Calpain-like protease palB/RIM13.